We begin with the raw amino-acid sequence, 664 residues long: Lysophospholipase 1 (664 aa).

An N-terminal signal peptide occupies residues 1–22; the sequence is MKLQSLLVSAAVLTSLTENVNA. Asn26, Asn33, Asn52, Asn78, Asn92, Asn123, Asn160, Asn170, Asn215, Asn277, Asn307, Asn345, Asn388, Asn459, Asn489, Asn513, Asn541, Asn565, and Asn582 each carry an N-linked (GlcNAc...) asparagine glycan. The PLA2c domain occupies 35-586; sequence TCDDDINLVR…TNYCWNGTID (552 aa). A lipid anchor (GPI-anchor amidated asparagine) is attached at Asn634. Positions 635 to 664 are cleaved as a propeptide — removed in mature form; that stretch reads AGNALVNYSNLNTNTFIGVLSVISAVFGLI.

Belongs to the lysophospholipase family.

It is found in the cell membrane. It catalyses the reaction a 1-acyl-sn-glycero-3-phosphocholine + H2O = sn-glycerol 3-phosphocholine + a fatty acid + H(+). It carries out the reaction a 1-acyl-sn-glycero-3-phospho-(1D-myo-inositol) + H2O = sn-glycero-3-phospho-1D-myo-inositol + a fatty acid + H(+). The enzyme catalyses a 1-acyl-sn-glycero-3-phospho-L-serine + H2O = sn-glycero-3-phospho-L-serine + a fatty acid + H(+). The catalysed reaction is a 1,2-diacyl-sn-glycero-3-phospho-(1D-myo-inositol) + 2 H2O = sn-glycero-3-phospho-1D-myo-inositol + 2 a carboxylate + 2 H(+). It catalyses the reaction a 1,2-diacyl-sn-glycero-3-phospho-L-serine + 2 H2O = sn-glycero-3-phospho-L-serine + 2 a carboxylate + 2 H(+). It carries out the reaction 2 1-hexadecanoyl-sn-glycero-3-phosphocholine = 1,2-dihexadecanoyl-sn-glycero-3-phosphocholine + sn-glycerol 3-phosphocholine. The enzyme catalyses 1-hexadecanoyl-sn-glycero-3-phosphocholine + H2O = sn-glycerol 3-phosphocholine + hexadecanoate + H(+). The catalysed reaction is 1,2-dihexadecanoyl-sn-glycero-3-phosphocholine + H2O = 1-hexadecanoyl-sn-glycero-3-phosphocholine + hexadecanoate + H(+). Sequentially removes both fatty acyl groups from diacylglycerophospholipids and therefore has both phospholipase B and lysophospholipase activities. It also displays transacylase activity. Substrate preference is phosphatidylserine &gt; phosphatidylinositol &gt;&gt; phosphatidylcholine &gt; phosphatidylethanolamine. The substrate specificity is pH- and ion-dependent. In contrast with activities observed at optimum pH 3.5, the order of substrate preference at pH 5.5 is phosphatidylcholine = phosphatidylethanolamine &gt;&gt; phosphatidylinositol. Degrades predominantly phosphatidylcholine and to some extent phosphatidylinositol in vivo. This chain is Lysophospholipase 1, found in Saccharomyces cerevisiae (strain ATCC 204508 / S288c) (Baker's yeast).